The sequence spans 518 residues: Cytochrome P450 704C1 (518 aa).

2 helical membrane-spanning segments follow: residues 5–25 and 299–319; these read ILTM…WIAS and VILN…SWFI. Cys-461 is a binding site for heme.

Belongs to the cytochrome P450 family. Requires heme as cofactor.

It is found in the membrane. The sequence is that of Cytochrome P450 704C1 (CYP704C1) from Pinus taeda (Loblolly pine).